Here is a 49-residue protein sequence, read N- to C-terminus: uncharacterized protein (49 aa).

Residues 17–39 (LLVFDTSLYIPPFMLSFIGYSLS) form a helical membrane-spanning segment.

The protein resides in the membrane. This is an uncharacterized protein from Saccharomyces cerevisiae (strain ATCC 204508 / S288c) (Baker's yeast).